Here is a 552-residue protein sequence, read N- to C-terminus: Steroid transmembrane transporter SLC22A24 (552 aa).

12 helical membrane passes run 16–36 (FQIL…PHIL), 146–166 (SVVQ…FGYL), 174–194 (MICS…AFAP), 204–224 (FLAG…VIEW), 235–255 (TLLL…AFVI), 260–280 (TLQL…RWLV), 349–369 (IVLY…GLIF), 380–400 (LFQV…LLVM), 407–427 (ISQV…TFLD), 436–456 (ILAT…SVHF), 473–493 (ILFS…VGFS), and 495–515 (YLPW…VLLL).

It belongs to the major facilitator (TC 2.A.1) superfamily. Organic cation transporter (TC 2.A.1.19) family.

It is found in the cell membrane. The enzyme catalyses estrone 3-sulfate(out) + glutarate(in) = estrone 3-sulfate(in) + glutarate(out). It catalyses the reaction 17beta-estradiol 17-O-(beta-D-glucuronate)(out) + glutarate(in) = 17beta-estradiol 17-O-(beta-D-glucuronate)(in) + glutarate(out). It carries out the reaction 5alpha-androstane-3alpha,17beta-diol 3-O-(beta-D-glucuronate)(out) + glutarate(in) = 5alpha-androstane-3alpha,17beta-diol 3-O-(beta-D-glucuronate)(in) + glutarate(out). The catalysed reaction is dehydroepiandrosterone 3-sulfate(out) + glutarate(in) = dehydroepiandrosterone 3-sulfate(in) + glutarate(out). The enzyme catalyses glutarate(in) + succinate(out) = glutarate(out) + succinate(in). Functionally, renal transmembrane organic anion/dicarboxylate exchanger that participates in the reabsorption of conjugated steroids, as well as bile acids, driven by an outward gradient of dicarboxylates such as glutarate or succinate. Transports androstanediol glucuronide (5alpha-androstane-3alpha,17beta-diol 3-O-(beta-D-glucuronate)), estrone 3-sulfate, and estradiol-17-glucuronide (17beta-estradiol 17-O-(beta-D-glucuronate)), but not taurocholate. The chain is Steroid transmembrane transporter SLC22A24 from Microcebus murinus (Gray mouse lemur).